Reading from the N-terminus, the 345-residue chain is MQITDQEALLRCIEHREIFHDEMLTLFRRIMSGEMSPVMMAAIITGLRVKKESIGEITAAAEVMREFATKVPLTDTTNLLDIVGTGGDGANTFNISTASMFVAAAAGARIAKHGGRSVSSSSGSADALDALGANINLKPELVAESIAQTGIGFMFAPNHHAAMKHAAAVRKELGVRTIFNILGPLTNPAGAPNILMGVFHPDLVGIQVRVLQRLGAQHAIVVWGRDNMDEVSLGAATMVGELIDGKIREYEIHPEDFGLPMIASRNLRVANAAESKTRILEVLANTAGPARDIVTLNAGTALYAAGVASSISAGLQLAREAIASGAARAKMEQFVRVTQELGSKA.

Residues Gly84, 87-88 (GD), Thr92, 94-97 (NIST), 112-120 (KHGGRSVSS), and Ser124 each bind 5-phospho-alpha-D-ribose 1-diphosphate. Gly84 lines the anthranilate pocket. Mg(2+) is bound at residue Ser96. Position 170 (Arg170) interacts with anthranilate. Residues Asp229 and Glu230 each coordinate Mg(2+).

It belongs to the anthranilate phosphoribosyltransferase family. In terms of assembly, homodimer. It depends on Mg(2+) as a cofactor.

The catalysed reaction is N-(5-phospho-beta-D-ribosyl)anthranilate + diphosphate = 5-phospho-alpha-D-ribose 1-diphosphate + anthranilate. It participates in amino-acid biosynthesis; L-tryptophan biosynthesis; L-tryptophan from chorismate: step 2/5. Functionally, catalyzes the transfer of the phosphoribosyl group of 5-phosphorylribose-1-pyrophosphate (PRPP) to anthranilate to yield N-(5'-phosphoribosyl)-anthranilate (PRA). In Herminiimonas arsenicoxydans, this protein is Anthranilate phosphoribosyltransferase.